The sequence spans 198 residues: ATP-dependent Clp protease proteolytic subunit (198 aa).

Catalysis depends on S101, which acts as the Nucleophile. H126 is a catalytic residue.

It belongs to the peptidase S14 family. As to quaternary structure, component of the chloroplastic Clp protease core complex.

It localises to the plastid. It is found in the chloroplast stroma. The catalysed reaction is Hydrolysis of proteins to small peptides in the presence of ATP and magnesium. alpha-casein is the usual test substrate. In the absence of ATP, only oligopeptides shorter than five residues are hydrolyzed (such as succinyl-Leu-Tyr-|-NHMec, and Leu-Tyr-Leu-|-Tyr-Trp, in which cleavage of the -Tyr-|-Leu- and -Tyr-|-Trp bonds also occurs).. Its function is as follows. Cleaves peptides in various proteins in a process that requires ATP hydrolysis. Has a chymotrypsin-like activity. Plays a major role in the degradation of misfolded proteins. This is ATP-dependent Clp protease proteolytic subunit from Psilotum nudum (Whisk fern).